The primary structure comprises 204 residues: Urease accessory protein UreG (204 aa).

12-19 (GPVGSGKT) lines the GTP pocket.

Belongs to the SIMIBI class G3E GTPase family. UreG subfamily. Homodimer. UreD, UreF and UreG form a complex that acts as a GTP-hydrolysis-dependent molecular chaperone, activating the urease apoprotein by helping to assemble the nickel containing metallocenter of UreC. The UreE protein probably delivers the nickel.

It is found in the cytoplasm. Facilitates the functional incorporation of the urease nickel metallocenter. This process requires GTP hydrolysis, probably effectuated by UreG. The protein is Urease accessory protein UreG of Pseudomonas fluorescens (strain ATCC BAA-477 / NRRL B-23932 / Pf-5).